A 168-amino-acid chain; its full sequence is Crossover junction endodeoxyribonuclease RuvC (168 aa).

Catalysis depends on residues Asp-7, Glu-67, and His-139. Mg(2+)-binding residues include Asp-7, Glu-67, and His-139.

This sequence belongs to the RuvC family. As to quaternary structure, homodimer which binds Holliday junction (HJ) DNA. The HJ becomes 2-fold symmetrical on binding to RuvC with unstacked arms; it has a different conformation from HJ DNA in complex with RuvA. In the full resolvosome a probable DNA-RuvA(4)-RuvB(12)-RuvC(2) complex forms which resolves the HJ. Mg(2+) serves as cofactor.

Its subcellular location is the cytoplasm. It carries out the reaction Endonucleolytic cleavage at a junction such as a reciprocal single-stranded crossover between two homologous DNA duplexes (Holliday junction).. In terms of biological role, the RuvA-RuvB-RuvC complex processes Holliday junction (HJ) DNA during genetic recombination and DNA repair. Endonuclease that resolves HJ intermediates. Cleaves cruciform DNA by making single-stranded nicks across the HJ at symmetrical positions within the homologous arms, yielding a 5'-phosphate and a 3'-hydroxyl group; requires a central core of homology in the junction. The consensus cleavage sequence is 5'-(A/T)TT(C/G)-3'. Cleavage occurs on the 3'-side of the TT dinucleotide at the point of strand exchange. HJ branch migration catalyzed by RuvA-RuvB allows RuvC to scan DNA until it finds its consensus sequence, where it cleaves and resolves the cruciform DNA. The chain is Crossover junction endodeoxyribonuclease RuvC from Deinococcus geothermalis (strain DSM 11300 / CIP 105573 / AG-3a).